Consider the following 533-residue polypeptide: Di/tripeptide-binding protein 3 (533 aa).

Positions 1 to 24 (MRKILPLRAWLAAGLILGSPFSHA) are cleaved as a signal peptide.

This sequence belongs to the bacterial solute-binding protein 5 family. As to quaternary structure, the complex is composed of two ATP-binding proteins (DppD and DppF), two transmembrane proteins (DppB and DppC) and a solute-binding protein (DppA3). Five orthologous SBPs (DppA1-A5) are present in P.aeruginosa, which increases the substrate specificity of the DppBCDF transporter.

In terms of biological role, part of the ABC transporter DppABCDF involved in the uptake of various di/tripeptides. Prefers dipeptides with acidic residues at the C-terminal end. Involved in the uptake of phaseolotoxin, a toxic tripeptide inhibiting the enzyme ornithine carbamoyltransferase. This chain is Di/tripeptide-binding protein 3, found in Pseudomonas aeruginosa (strain UCBPP-PA14).